Reading from the N-terminus, the 311-residue chain is tRNA-cytidine(32) 2-sulfurtransferase (311 aa).

The short motif at 47–52 (SGGKDS) is the PP-loop motif element. Residues cysteine 122, cysteine 125, and cysteine 213 each coordinate [4Fe-4S] cluster.

The protein belongs to the TtcA family. As to quaternary structure, homodimer. The cofactor is Mg(2+). [4Fe-4S] cluster is required as a cofactor.

It localises to the cytoplasm. The enzyme catalyses cytidine(32) in tRNA + S-sulfanyl-L-cysteinyl-[cysteine desulfurase] + AH2 + ATP = 2-thiocytidine(32) in tRNA + L-cysteinyl-[cysteine desulfurase] + A + AMP + diphosphate + H(+). It functions in the pathway tRNA modification. In terms of biological role, catalyzes the ATP-dependent 2-thiolation of cytidine in position 32 of tRNA, to form 2-thiocytidine (s(2)C32). The sulfur atoms are provided by the cysteine/cysteine desulfurase (IscS) system. The protein is tRNA-cytidine(32) 2-sulfurtransferase of Klebsiella pneumoniae subsp. pneumoniae (strain ATCC 700721 / MGH 78578).